Consider the following 157-residue polypeptide: UPF0303 protein NT01EI_1570 (157 aa).

It belongs to the UPF0303 family.

This chain is UPF0303 protein NT01EI_1570, found in Edwardsiella ictaluri (strain 93-146).